A 109-amino-acid chain; its full sequence is Flagellar hook-basal body complex protein FliE (109 aa).

The tract at residues 1-38 is disordered; the sequence is MQAIHNDKSLLSPFSELNTDNRTKREESGNAFKEQKGG. Residues 19–38 show a composition bias toward basic and acidic residues; the sequence is TDNRTKREESGNAFKEQKGG.

Belongs to the FliE family.

The protein localises to the bacterial flagellum basal body. This chain is Flagellar hook-basal body complex protein FliE, found in Helicobacter pylori (strain G27).